We begin with the raw amino-acid sequence, 472 residues long: Gamma-glutamylputrescine synthetase PuuA (472 aa).

The GS beta-grasp domain maps to 35-129 (PNTQYVDVLL…MLLTMVDEDG (95 aa)). The GS catalytic domain occupies 136-472 (PRNVLNRLWQ…TEIEWMLKNA (337 aa)).

This sequence belongs to the glutamine synthetase family. Dodecamer. Mg(2+) serves as cofactor. It depends on Mn(2+) as a cofactor.

It catalyses the reaction putrescine + L-glutamate + ATP = gamma-L-glutamylputrescine + ADP + phosphate + H(+). Its pathway is amine and polyamine degradation; putrescine degradation; 4-aminobutanoate from putrescine: step 1/4. Its function is as follows. Involved in the breakdown of putrescine. Catalyzes the ATP-dependent gamma-glutamylation of putrescine, producing gamma-L-glutamylputrescine. Absolutely essential to utilize putrescine as both nitrogen and carbon sources and to decrease the toxicity of putrescine, which can lead to inhibition of cell growth and protein synthesis. In vitro is also able to use several diamines, and spermidine and spermine, instead of putrescine, but with a much lower activity, and cannot catalyze the gamma-glutamylation of ornithine or GABA. This chain is Gamma-glutamylputrescine synthetase PuuA, found in Escherichia coli (strain K12).